Consider the following 356-residue polypeptide: S-adenosylmethionine:tRNA ribosyltransferase-isomerase (356 aa).

This sequence belongs to the QueA family. Monomer.

Its subcellular location is the cytoplasm. It carries out the reaction 7-aminomethyl-7-carbaguanosine(34) in tRNA + S-adenosyl-L-methionine = epoxyqueuosine(34) in tRNA + adenine + L-methionine + 2 H(+). Its pathway is tRNA modification; tRNA-queuosine biosynthesis. Transfers and isomerizes the ribose moiety from AdoMet to the 7-aminomethyl group of 7-deazaguanine (preQ1-tRNA) to give epoxyqueuosine (oQ-tRNA). This chain is S-adenosylmethionine:tRNA ribosyltransferase-isomerase, found in Xanthomonas campestris pv. campestris (strain 8004).